Reading from the N-terminus, the 360-residue chain is MKPSIVAKLEALHERHEEVQALLGDAQTIADQERFRALSREYAQLSDVSRCFTDWQQVQEDIETAQMMLDDPEMREMAQDELRKAKEKSEQLEQQLQVLLLPKDPDDERNAFLEVRAGTGGDEAALFAGDLFRMYSRYAEARRWRVEIMSASEGEHGGYKEIIAKISGDGVYGRLKFESGGHRVQRVPATESQGRIHTSACTVAVMPELPDAELPDINPADLRIDTFRSSGAGGQHVNTTDSAIRITHLPTGIVVECQDERSQHKNKAKALSVLGARIHAAEMAKRQQAEASTRRNLLGSGDRSDRNRTYNFPQGRVTDHRINLTLYRLDEVMEGKLDMLIEPIIQEHQADQLAALSEQE.

Glutamine 235 carries the N5-methylglutamine modification. The segment at 285–313 (KRQQAEASTRRNLLGSGDRSDRNRTYNFP) is disordered.

It belongs to the prokaryotic/mitochondrial release factor family. Methylated by PrmC. Methylation increases the termination efficiency of RF1.

Its subcellular location is the cytoplasm. Functionally, peptide chain release factor 1 directs the termination of translation in response to the peptide chain termination codons UAG and UAA. This chain is Peptide chain release factor 1, found in Shigella boydii serotype 18 (strain CDC 3083-94 / BS512).